We begin with the raw amino-acid sequence, 299 residues long: Type II restriction enzyme BglI (299 aa).

Mg(2+)-binding residues include Asp-116, Asp-142, and Ile-143.

As to quaternary structure, homodimer. Mg(2+) serves as cofactor.

The enzyme catalyses Endonucleolytic cleavage of DNA to give specific double-stranded fragments with terminal 5'-phosphates.. Functionally, a P subtype restriction enzyme that recognizes the double-stranded sequence 5'-GCCNNNNNGGC-3' and cleaves before N-8. The polypeptide is Type II restriction enzyme BglI (bglIR) (Bacillus subtilis).